The primary structure comprises 279 residues: Odontogenic ameloblast-associated protein (279 aa).

The N-terminal stretch at 1 to 15 is a signal peptide; the sequence is MKIIILLGFLGATLS. 2 O-linked (GalNAc...) threonine glycosylation sites follow: Thr-115 and Thr-119. The tract at residues 127–129 is interaction with ARHGEF5; that stretch reads MPY. A compositionally biased stretch (polar residues) spans 243 to 263; that stretch reads STSPKPSTTNVFTSAVDQTIT. Positions 243–279 are disordered; that stretch reads STSPKPSTTNVFTSAVDQTITPELPEEKDKTDSLREP. Residue Thr-244 is glycosylated (O-linked (GalNAc...) threonine). Residue Ser-249 is glycosylated (O-linked (GalNAc...) serine). 3 O-linked (GalNAc...) threonine glycosylation sites follow: Thr-250, Thr-251, and Thr-255. A glycan (O-linked (GalNAc...) serine) is linked at Ser-256. Thr-261, Thr-263, and Thr-273 each carry an O-linked (GalNAc...) threonine glycan. The segment covering 267 to 279 has biased composition (basic and acidic residues); the sequence is PEEKDKTDSLREP. Residue Ser-275 is glycosylated (O-linked (GalNAc...) serine).

The protein belongs to the ODAM family. In terms of assembly, interacts (via C-terminus) with ARHGEF5. Post-translationally, O-glycosylated. Expressed in the junctional epithelium of healthy teeth. In periodontitis, absent in the pocket epithelium of the diseased periodontium but is detected in the gingival crevicular fluid.

Its subcellular location is the secreted. The protein resides in the cytoplasm. It localises to the nucleus. Functionally, tooth-associated epithelia protein that probably plays a role in odontogenesis, the complex process that results in the initiation and generation of the tooth. May be incorporated in the enamel matrix at the end of mineralization process. Involved in the induction of RHOA activity via interaction with ARHGEF and expression of downstream factors such as ROCK. Plays a role in attachment of the junctional epithelium to the tooth surface. The chain is Odontogenic ameloblast-associated protein (ODAM) from Homo sapiens (Human).